Consider the following 394-residue polypeptide: Phosphoglycerate kinase (394 aa).

Substrate is bound by residues 21-23, arginine 36, 59-62, arginine 118, and arginine 151; these read DFN and HLGR. Phosphoserine is present on serine 183. ATP is bound by residues lysine 201 and glycine 292. Phosphothreonine is present on threonine 299. Residues glutamate 323 and 350 to 353 each bind ATP; that span reads GGDS.

This sequence belongs to the phosphoglycerate kinase family. In terms of assembly, monomer.

The protein localises to the cytoplasm. The catalysed reaction is (2R)-3-phosphoglycerate + ATP = (2R)-3-phospho-glyceroyl phosphate + ADP. Its pathway is carbohydrate degradation; glycolysis; pyruvate from D-glyceraldehyde 3-phosphate: step 2/5. In Anoxybacillus flavithermus (strain DSM 21510 / WK1), this protein is Phosphoglycerate kinase.